The chain runs to 198 residues: Cytochrome c oxidase subunit 2 (198 aa).

Residues Ala-1–Met-13 traverse the membrane as a helical segment. Residues Leu-14 to Gln-26 are Mitochondrial matrix-facing. A helical transmembrane segment spans residues Glu-27–Met-54. The Mitochondrial intermembrane segment spans residues Asp-55–Leu-198. Residues His-128, Cys-163, Glu-165, Cys-167, His-171, and Met-174 each coordinate Cu cation. Glu-165 contributes to the Mg(2+) binding site.

It belongs to the cytochrome c oxidase subunit 2 family. In terms of assembly, component of the cytochrome c oxidase (complex IV, CIV), a multisubunit enzyme composed of 14 subunits. The complex is composed of a catalytic core of 3 subunits MT-CO1, MT-CO2 and MT-CO3, encoded in the mitochondrial DNA, and 11 supernumerary subunits COX4I, COX5A, COX5B, COX6A, COX6B, COX6C, COX7A, COX7B, COX7C, COX8 and NDUFA4, which are encoded in the nuclear genome. The complex exists as a monomer or a dimer and forms supercomplexes (SCs) in the inner mitochondrial membrane with NADH-ubiquinone oxidoreductase (complex I, CI) and ubiquinol-cytochrome c oxidoreductase (cytochrome b-c1 complex, complex III, CIII), resulting in different assemblies (supercomplex SCI(1)III(2)IV(1) and megacomplex MCI(2)III(2)IV(2)). Found in a complex with TMEM177, COA6, COX18, COX20, SCO1 and SCO2. Interacts with TMEM177 in a COX20-dependent manner. Interacts with COX20. Interacts with COX16. Cu cation is required as a cofactor.

Its subcellular location is the mitochondrion inner membrane. It catalyses the reaction 4 Fe(II)-[cytochrome c] + O2 + 8 H(+)(in) = 4 Fe(III)-[cytochrome c] + 2 H2O + 4 H(+)(out). Component of the cytochrome c oxidase, the last enzyme in the mitochondrial electron transport chain which drives oxidative phosphorylation. The respiratory chain contains 3 multisubunit complexes succinate dehydrogenase (complex II, CII), ubiquinol-cytochrome c oxidoreductase (cytochrome b-c1 complex, complex III, CIII) and cytochrome c oxidase (complex IV, CIV), that cooperate to transfer electrons derived from NADH and succinate to molecular oxygen, creating an electrochemical gradient over the inner membrane that drives transmembrane transport and the ATP synthase. Cytochrome c oxidase is the component of the respiratory chain that catalyzes the reduction of oxygen to water. Electrons originating from reduced cytochrome c in the intermembrane space (IMS) are transferred via the dinuclear copper A center (CU(A)) of subunit 2 and heme A of subunit 1 to the active site in subunit 1, a binuclear center (BNC) formed by heme A3 and copper B (CU(B)). The BNC reduces molecular oxygen to 2 water molecules using 4 electrons from cytochrome c in the IMS and 4 protons from the mitochondrial matrix. In Tinamus major (Great tinamou), this protein is Cytochrome c oxidase subunit 2 (MT-CO2).